We begin with the raw amino-acid sequence, 410 residues long: Lissencephaly-1 homolog B (410 aa).

One can recognise a LisH domain in the interval 7–39 (QRDELNRAIADYLRSNGYEEAYSTFKKEAELDM). A coiled-coil region spans residues 56 to 82 (TSVIRLQKKVMELESKLNEAKEEITLG). WD repeat units lie at residues 106–147 (GHRS…RTLK), 148–187 (GHTD…CIRT), 190–229 (GHDH…CVKT), 232–271 (GHRE…CKAE), 274–333 (EHEH…CLMT), 336–375 (GHDN…CMKT), and 378–410 (AHEH…WECR).

The protein belongs to the WD repeat LIS1/nudF family. As to quaternary structure, can self-associate. Component of the cytosolic PAF-AH (I) heterotetrameric enzyme, which is composed of PAFAH1B1 (beta), PAFAH1B2 (alpha2) and PAFAH1B3 (alpha1) subunits. The catalytic activity of the enzyme resides in the alpha1 (PAFAH1B3) and alpha2 (PAFAH1B2) subunits, whereas the beta subunit (PAFAH1B1) has regulatory activity. Trimer formation is not essential for the catalytic activity. Interacts with dynein, dynactin, nde1 and ndel1.

The protein resides in the cytoplasm. It is found in the cytoskeleton. The protein localises to the microtubule organizing center. It localises to the centrosome. Regulatory subunit (beta subunit) of the cytosolic type I platelet-activating factor (PAF) acetylhydrolase (PAF-AH (I)), an enzyme that catalyzes the hydrolyze of the acetyl group at the sn-2 position of PAF and its analogs and participates in PAF inactivation. Regulates the PAF-AH (I) activity in a catalytic dimer composition-dependent manner. Positively regulates the activity of the minus-end directed microtubule motor protein dynein. May enhance dynein-mediated microtubule sliding by targeting dynein to the microtubule plus end. Required for several dynein- and microtubule-dependent processes such as the maintenance of Golgi integrity, the peripheral transport of microtubule fragments and the coupling of the nucleus and centrosome. May be required for proliferation of neuronal precursors and neuronal migration. This chain is Lissencephaly-1 homolog B (pafah1b1-2), found in Salmo salar (Atlantic salmon).